The following is a 326-amino-acid chain: Acetyl-coenzyme A carboxylase carboxyl transferase subunit alpha (326 aa).

The region spanning 45-298 (LEARAMQLRE…KQVLLENLDE (254 aa)) is the CoA carboxyltransferase C-terminal domain.

The protein belongs to the AccA family. Acetyl-CoA carboxylase is a heterohexamer composed of biotin carboxyl carrier protein (AccB), biotin carboxylase (AccC) and two subunits each of ACCase subunit alpha (AccA) and ACCase subunit beta (AccD).

It localises to the cytoplasm. It carries out the reaction N(6)-carboxybiotinyl-L-lysyl-[protein] + acetyl-CoA = N(6)-biotinyl-L-lysyl-[protein] + malonyl-CoA. It functions in the pathway lipid metabolism; malonyl-CoA biosynthesis; malonyl-CoA from acetyl-CoA: step 1/1. Its function is as follows. Component of the acetyl coenzyme A carboxylase (ACC) complex. First, biotin carboxylase catalyzes the carboxylation of biotin on its carrier protein (BCCP) and then the CO(2) group is transferred by the carboxyltransferase to acetyl-CoA to form malonyl-CoA. This is Acetyl-coenzyme A carboxylase carboxyl transferase subunit alpha from Nostoc punctiforme (strain ATCC 29133 / PCC 73102).